The following is a 308-amino-acid chain: Pyrroline-5-carboxylate reductase 3 (308 aa).

It belongs to the pyrroline-5-carboxylate reductase family. Homodecamer; composed of 5 homodimers.

The protein resides in the cytoplasm. It catalyses the reaction L-proline + NADP(+) = (S)-1-pyrroline-5-carboxylate + NADPH + 2 H(+). It carries out the reaction L-proline + NAD(+) = (S)-1-pyrroline-5-carboxylate + NADH + 2 H(+). The protein operates within amino-acid biosynthesis; L-proline biosynthesis; L-proline from L-glutamate 5-semialdehyde: step 1/1. Its function is as follows. Oxidoreductase that catalyzes the last step in proline biosynthesis, which corresponds to the reduction of pyrroline-5-carboxylate (P5C) to L-proline using NAD(P)H. Proline is synthesized from either glutamate or ornithine; both are converted to P5C, and then to proline via pyrroline-5-carboxylate reductases (PYCRs). PYCR3 is exclusively linked to the biosynthesis of proline from ornithine. This chain is Pyrroline-5-carboxylate reductase 3, found in Bos taurus (Bovine).